Here is a 495-residue protein sequence, read N- to C-terminus: Cobyric acid synthase (495 aa).

Residues 252 to 440 (RPKVVVLAYP…VHGLFADDGL (189 aa)) enclose the GATase cobBQ-type domain. Residue Cys-334 is the Nucleophile of the active site. The active site involves His-432.

Belongs to the CobB/CobQ family. CobQ subfamily.

The protein operates within cofactor biosynthesis; adenosylcobalamin biosynthesis. Its function is as follows. Catalyzes amidations at positions B, D, E, and G on adenosylcobyrinic A,C-diamide. NH(2) groups are provided by glutamine, and one molecule of ATP is hydrogenolyzed for each amidation. This chain is Cobyric acid synthase, found in Bradyrhizobium sp. (strain ORS 278).